Here is a 612-residue protein sequence, read N- to C-terminus: Phosphomethylpyrimidine synthase (612 aa).

2 disordered regions span residues 1-33 (MTIKDARTPASTQNTAQADTAENTDTAEDTEAG) and 105-146 (AGRP…RDGN). The segment covering 12–24 (TQNTAQADTAENT) has biased composition (low complexity). The span at 105–117 (AGRPVRPEDDGIK) shows a compositional bias: basic and acidic residues. Substrate-binding positions include Asn-213, Met-242, Tyr-271, His-307, 327–329 (SRG), 368–371 (DGLR), and Glu-407. A Zn(2+)-binding site is contributed by His-411. Position 434 (Tyr-434) interacts with substrate. His-475 contacts Zn(2+). Residues Cys-555, Cys-558, and Cys-563 each contribute to the [4Fe-4S] cluster site.

The protein belongs to the ThiC family. [4Fe-4S] cluster serves as cofactor.

The enzyme catalyses 5-amino-1-(5-phospho-beta-D-ribosyl)imidazole + S-adenosyl-L-methionine = 4-amino-2-methyl-5-(phosphooxymethyl)pyrimidine + CO + 5'-deoxyadenosine + formate + L-methionine + 3 H(+). It participates in cofactor biosynthesis; thiamine diphosphate biosynthesis. Its function is as follows. Catalyzes the synthesis of the hydroxymethylpyrimidine phosphate (HMP-P) moiety of thiamine from aminoimidazole ribotide (AIR) in a radical S-adenosyl-L-methionine (SAM)-dependent reaction. This chain is Phosphomethylpyrimidine synthase, found in Streptomyces coelicolor (strain ATCC BAA-471 / A3(2) / M145).